The following is a 199-amino-acid chain: Thymidylate kinase (199 aa).

Residue 7-14 participates in ATP binding; it reads GTEGVGKT.

It belongs to the thymidylate kinase family.

It carries out the reaction dTMP + ATP = dTDP + ADP. Its function is as follows. Phosphorylation of dTMP to form dTDP in both de novo and salvage pathways of dTTP synthesis. The sequence is that of Thymidylate kinase from Acinetobacter baumannii (strain ACICU).